The following is a 324-amino-acid chain: Aquaporin-4 (324 aa).

Topologically, residues 1 to 36 (MSDRPAARPWGKCGSLCRREEIMVAFKGVWTQAFWK) are cytoplasmic. 2 S-palmitoyl cysteine lipidation sites follow: cysteine 13 and cysteine 17. Residues 37-57 (AVTAEFLAMLIFVLLSLGSTI) form a helical membrane-spanning segment. Topologically, residues 58–69 (NWGGKENPLPVD) are extracellular. Residues 70–89 (MVLISLCFGLSIATMVQCFG) form a helical membrane-spanning segment. Residues 90-93 (HISG) lie on the Cytoplasmic side of the membrane. An intramembrane region (discontinuously helical) is located at residues 94-101 (GHINPAVT). The NPA 1 signature appears at 97–99 (NPA). Over 102–115 (VAMVCTRKISIAKS) the chain is Cytoplasmic. Serine 111 bears the Phosphoserine; by PKG mark. A helical transmembrane segment spans residues 116 to 136 (VFYIAAQCLGAIIGAGILYLV). At 137 to 155 (TPPSVVGGLGVTTVHGNLT) the chain is on the extracellular side. An N-linked (GlcNAc...) asparagine glycan is attached at asparagine 153. Residues 156–176 (AGHGLLVELIITFQLVFTIFA) traverse the membrane as a helical segment. Topologically, residues 177-184 (SCDSKRTD) are cytoplasmic. Serine 180 carries the post-translational modification Phosphoserine; by PKC. The chain crosses the membrane as a helical span at residues 185–205 (VTGSIALAIGFSVAIGHLFAI). An N-linked (GlcNAc...) asparagine glycan is attached at asparagine 206. The Extracellular portion of the chain corresponds to 206-208 (NYT). The segment at residues 209–222 (GASMNPARSFGPAV) is an intramembrane region (discontinuously helical). The NPA 2 signature appears at 213–215 (NPA). The Extracellular segment spans residues 223-231 (IMGNWENHW). The chain crosses the membrane as a helical span at residues 232–252 (IYWVGPIIGAVLAGGLYEYVF). Residues 253–324 (CPDVELKRRF…PSGEIAQTQH (72 aa)) lie on the Cytoplasmic side of the membrane. A phosphoserine mark is found at serine 276 and serine 285. The residue at position 289 (threonine 289) is a Phosphothreonine. Over residues 305-316 (DRGDEKKGKDPS) the composition is skewed to basic and acidic residues. The segment at 305–324 (DRGDEKKGKDPSGEIAQTQH) is disordered.

This sequence belongs to the MIP/aquaporin (TC 1.A.8) family. As to quaternary structure, homotetramer. The tetramers can form oligomeric arrays in membranes. The size of the oligomers differs between tissues and is smaller in skeletal muscle than in brain. Interaction between AQP4 oligomeric arrays in close-by cells can contribute to cell-cell adhesion. Part of a complex containing MLC1, TRPV4, HEPACAM and ATP1B1. In terms of processing, phosphorylation by PKC at Ser-180 reduces conductance by 50%. Phosphorylation by PKG at Ser-111 in response to glutamate increases conductance by 40%. Isoform 2: Palmitoylated on its N-terminal region. Isoform 1: Not palmitoylated. Not expressed in kidney, Detectable in gastric parietal and brain astroglial cells. The absence of AQP4 in kidney may be critical for the extreme urinary concentration that occurs in this species (up to 5,000 mosmol/kg H(2)O).

It localises to the cell membrane. It is found in the basolateral cell membrane. The protein localises to the endosome membrane. The protein resides in the sarcolemma. Its subcellular location is the cell projection. The enzyme catalyses H2O(in) = H2O(out). In terms of biological role, forms a water-specific channel. Plays an important role in brain water homeostasis and in glymphatic solute transport. Required for a normal rate of water exchange across the blood brain interface. Required for normal levels of cerebrospinal fluid influx into the brain cortex and parenchyma along paravascular spaces that surround penetrating arteries, and for normal drainage of interstitial fluid along paravenous drainage pathways. Thereby, it is required for normal clearance of solutes from the brain interstitial fluid, including soluble beta-amyloid peptides derived from APP. Plays a redundant role in urinary water homeostasis and urinary concentrating ability. This Dipodomys merriami (Merriam's kangaroo rat) protein is Aquaporin-4 (AQP4).